A 344-amino-acid polypeptide reads, in one-letter code: RNA 3'-terminal phosphate cyclase (344 aa).

ATP-binding positions include Gln103 and His283–Gln287. His308 functions as the Tele-AMP-histidine intermediate in the catalytic mechanism.

This sequence belongs to the RNA 3'-terminal cyclase family. Type 1 subfamily.

It is found in the cytoplasm. The enzyme catalyses a 3'-end 3'-phospho-ribonucleotide-RNA + ATP = a 3'-end 2',3'-cyclophospho-ribonucleotide-RNA + AMP + diphosphate. Functionally, catalyzes the conversion of 3'-phosphate to a 2',3'-cyclic phosphodiester at the end of RNA. The mechanism of action of the enzyme occurs in 3 steps: (A) adenylation of the enzyme by ATP; (B) transfer of adenylate to an RNA-N3'P to produce RNA-N3'PP5'A; (C) and attack of the adjacent 2'-hydroxyl on the 3'-phosphorus in the diester linkage to produce the cyclic end product. The biological role of this enzyme is unknown but it is likely to function in some aspects of cellular RNA processing. In Salmonella agona (strain SL483), this protein is RNA 3'-terminal phosphate cyclase.